A 149-amino-acid chain; its full sequence is Myosin, essential light chain (149 aa).

EF-hand domains are found at residues 7 to 42 (SMID…FGLN) and 79 to 114 (GSYE…LGEK).

As to quaternary structure, myosin is a hexamer of 2 heavy chains and 4 light chains (two regulatory light chains and two essential light chains).

The protein is Myosin, essential light chain of Branchiostoma floridae (Florida lancelet).